A 366-amino-acid polypeptide reads, in one-letter code: tRNA/tmRNA (uracil-C(5))-methyltransferase (366 aa).

S-adenosyl-L-methionine-binding residues include glutamine 190, tyrosine 218, asparagine 223, glutamate 239, and aspartate 299. Cysteine 324 acts as the Nucleophile in catalysis. Residue glutamate 358 is the Proton acceptor of the active site.

Belongs to the class I-like SAM-binding methyltransferase superfamily. RNA M5U methyltransferase family. TrmA subfamily.

The catalysed reaction is uridine(54) in tRNA + S-adenosyl-L-methionine = 5-methyluridine(54) in tRNA + S-adenosyl-L-homocysteine + H(+). The enzyme catalyses uridine(341) in tmRNA + S-adenosyl-L-methionine = 5-methyluridine(341) in tmRNA + S-adenosyl-L-homocysteine + H(+). Its function is as follows. Dual-specificity methyltransferase that catalyzes the formation of 5-methyluridine at position 54 (m5U54) in all tRNAs, and that of position 341 (m5U341) in tmRNA (transfer-mRNA). The polypeptide is tRNA/tmRNA (uracil-C(5))-methyltransferase (Salmonella paratyphi B (strain ATCC BAA-1250 / SPB7)).